Reading from the N-terminus, the 494-residue chain is Tripartite motif-containing protein 5 (494 aa).

N-acetylalanine is present on A2. The RING-type zinc-finger motif lies at C15–R59. S86 bears the Phosphoserine mark. A B box-type zinc finger spans residues Q91–V132. Residues C96, H99, C118, and H124 each contribute to the Zn(2+) site. Residues V132–V223 adopt a coiled-coil conformation. A required for interaction with GABARAP and for autophagy region spans residues F186–K199. The 215-residue stretch at P280–S494 folds into the B30.2/SPRY domain.

This sequence belongs to the TRIM/RBCC family. In terms of assembly, can form homodimers and homotrimers. In addition to lower-order dimerization, also exhibits a higher-order multimerization and both low- and high-order multimerizations are essential for its restriction activity. Interacts with BTBD1 and BTBD2. Interacts with PSMC4, PSMC5, PSMD7 and HSPA8/HSC70. Interacts (via B30.2/SPRY domain) with HSPA1A/B. Interacts with PSMC2, MAP3K7/TAK1, TAB2 and TAB3. Interacts with SQSTM1. Interacts with TRIM6 and TRIM34. Interacts with ULK1 (phosphorylated form), GABARAP, GABARAPL1, GABARAPL2, MAP1LC3A, MAP1LC3C and BECN1. Post-translationally, degraded in a proteasome-independent fashion in the absence of viral infection but in a proteasome-dependent fashion following exposure to restriction sensitive virus. In terms of processing, autoubiquitinated in a RING finger- and UBE2D2-dependent manner. Monoubiquitinated by TRIM21. Deubiquitinated by Yersinia YopJ. Ubiquitination may not lead to proteasomal degradation.

The protein localises to the cytoplasm. Its subcellular location is the nucleus. The catalysed reaction is S-ubiquitinyl-[E2 ubiquitin-conjugating enzyme]-L-cysteine + [acceptor protein]-L-lysine = [E2 ubiquitin-conjugating enzyme]-L-cysteine + N(6)-ubiquitinyl-[acceptor protein]-L-lysine.. It participates in protein modification; protein ubiquitination. Functionally, capsid-specific restriction factor that prevents infection from non-host-adapted retroviruses. Blocks viral replication early in the life cycle, after viral entry but before reverse transcription. In addition to acting as a capsid-specific restriction factor, also acts as a pattern recognition receptor that activates innate immune signaling in response to the retroviral capsid lattice. Binding to the viral capsid triggers its E3 ubiquitin ligase activity, and in concert with the heterodimeric ubiquitin conjugating enzyme complex UBE2V1-UBE2N (also known as UBC13-UEV1A complex) generates 'Lys-63'-linked polyubiquitin chains, which in turn are catalysts in the autophosphorylation of the MAP3K7/TAK1 complex (includes TAK1, TAB2, and TAB3). Activation of the MAP3K7/TAK1 complex by autophosphorylation results in the induction and expression of NF-kappa-B and MAPK-responsive inflammatory genes, thereby leading to an innate immune response in the infected cell. Plays a role in regulating autophagy through activation of autophagy regulator BECN1 by causing its dissociation from its inhibitors BCL2 and TAB2. This is Tripartite motif-containing protein 5 (TRIM5) from Cebuella pygmaea (Pygmy marmoset).